A 570-amino-acid chain; its full sequence is Proline--tRNA ligase (570 aa).

Belongs to the class-II aminoacyl-tRNA synthetase family. ProS type 1 subfamily. Homodimer.

It localises to the cytoplasm. It catalyses the reaction tRNA(Pro) + L-proline + ATP = L-prolyl-tRNA(Pro) + AMP + diphosphate. Catalyzes the attachment of proline to tRNA(Pro) in a two-step reaction: proline is first activated by ATP to form Pro-AMP and then transferred to the acceptor end of tRNA(Pro). As ProRS can inadvertently accommodate and process non-cognate amino acids such as alanine and cysteine, to avoid such errors it has two additional distinct editing activities against alanine. One activity is designated as 'pretransfer' editing and involves the tRNA(Pro)-independent hydrolysis of activated Ala-AMP. The other activity is designated 'posttransfer' editing and involves deacylation of mischarged Ala-tRNA(Pro). The misacylated Cys-tRNA(Pro) is not edited by ProRS. In Neisseria meningitidis serogroup B (strain ATCC BAA-335 / MC58), this protein is Proline--tRNA ligase.